The primary structure comprises 294 residues: Probable 2-(5''-triphosphoribosyl)-3'-dephosphocoenzyme-A synthase (294 aa).

It belongs to the CitG/MdcB family.

The enzyme catalyses 3'-dephospho-CoA + ATP = 2'-(5''-triphospho-alpha-D-ribosyl)-3'-dephospho-CoA + adenine. The protein is Probable 2-(5''-triphosphoribosyl)-3'-dephosphocoenzyme-A synthase of Streptococcus pyogenes serotype M18 (strain MGAS8232).